The sequence spans 752 residues: Ribonucleases P/MRP protein subunit popl-1 (752 aa).

A disordered region spans residues 638–663 (KTTKRKRVNRKKRESKKRRKIEQEKR). Over residues 640-657 (TKRKRVNRKKRESKKRRK) the composition is skewed to basic residues.

As to quaternary structure, component of nuclear RNase P and RNase MRP ribonucleoproteins. Several subunits of RNase P are also part of the RNase MRP complex.

It localises to the nucleus. The protein localises to the nucleolus. It catalyses the reaction Endonucleolytic cleavage of RNA, removing 5'-extranucleotides from tRNA precursor.. In terms of biological role, component of ribonuclease P, a ribonucleoprotein complex that generates mature tRNA molecules by cleaving their 5'-ends. Also a component of the MRP ribonuclease complex, which cleaves pre-rRNA sequences. This is Ribonucleases P/MRP protein subunit popl-1 from Caenorhabditis elegans.